Here is a 295-residue protein sequence, read N- to C-terminus: tRNA-cytidine(32) 2-sulfurtransferase (295 aa).

The PP-loop motif signature appears at 59-64 (SGGKDS). [4Fe-4S] cluster contacts are provided by Cys134, Cys137, and Cys225.

It belongs to the TtcA family. Homodimer. It depends on Mg(2+) as a cofactor. [4Fe-4S] cluster is required as a cofactor.

The protein resides in the cytoplasm. The catalysed reaction is cytidine(32) in tRNA + S-sulfanyl-L-cysteinyl-[cysteine desulfurase] + AH2 + ATP = 2-thiocytidine(32) in tRNA + L-cysteinyl-[cysteine desulfurase] + A + AMP + diphosphate + H(+). The protein operates within tRNA modification. Its function is as follows. Catalyzes the ATP-dependent 2-thiolation of cytidine in position 32 of tRNA, to form 2-thiocytidine (s(2)C32). The sulfur atoms are provided by the cysteine/cysteine desulfurase (IscS) system. The polypeptide is tRNA-cytidine(32) 2-sulfurtransferase (Ruegeria sp. (strain TM1040) (Silicibacter sp.)).